Consider the following 431-residue polypeptide: STE20-related kinase adapter protein alpha (431 aa).

2 positions are modified to phosphoserine: Ser2 and Ser46. The Protein kinase domain occupies 69–379 (YELLTVIGKG…ASTLLNHSFF (311 aa)). Residues 310–347 (LTMSPSRSVANSGLSDSLTTSTPRPSNGDSPSHPYHRT) form a disordered region. A compositionally biased stretch (polar residues) spans 312–339 (MSPSRSVANSGLSDSLTTSTPRPSNGDS). Phosphothreonine; by LKB1 occurs at positions 329 and 419.

Belongs to the protein kinase superfamily. STE Ser/Thr protein kinase family. STE20 subfamily. In terms of assembly, component of a trimeric complex composed of STK11/LKB1, STRAD (STRADA or STRADB) and CAB39/MO25 (CAB39/MO25alpha or CAB39L/MO25beta): the complex tethers STK11/LKB1 in the cytoplasm and stimulates its catalytic activity.

The protein resides in the nucleus. Its subcellular location is the cytoplasm. In terms of biological role, pseudokinase which, in complex with CAB39/MO25 (CAB39/MO25alpha or CAB39L/MO25beta), binds to and activates STK11/LKB1. Adopts a closed conformation typical of active protein kinases and binds STK11/LKB1 as a pseudosubstrate, promoting conformational change of STK11/LKB1 in an active conformation. This Homo sapiens (Human) protein is STE20-related kinase adapter protein alpha (STRADA).